The primary structure comprises 869 residues: Probable beta-glucosidase F (869 aa).

Positions 1 to 19 are cleaved as a signal peptide; it reads MRVLSAIALVASLASSALS. N-linked (GlcNAc...) asparagine glycosylation is found at Asn77 and Asn261. Asp289 is an active-site residue. Residues Asn332, Asn364, Asn399, and Asn478 are each glycosylated (N-linked (GlcNAc...) asparagine). Residues 677–697 are disordered; the sequence is STYPPTRPPKGPTPTYPTAIP. The span at 681-691 shows a compositional bias: pro residues; that stretch reads PTRPPKGPTPT. Asn728 carries an N-linked (GlcNAc...) asparagine glycan.

This sequence belongs to the glycosyl hydrolase 3 family.

It is found in the secreted. The catalysed reaction is Hydrolysis of terminal, non-reducing beta-D-glucosyl residues with release of beta-D-glucose.. It functions in the pathway glycan metabolism; cellulose degradation. Functionally, beta-glucosidases are one of a number of cellulolytic enzymes involved in the degradation of cellulosic biomass. Catalyzes the last step releasing glucose from the inhibitory cellobiose. The chain is Probable beta-glucosidase F (bglF) from Aspergillus fumigatus (strain ATCC MYA-4609 / CBS 101355 / FGSC A1100 / Af293) (Neosartorya fumigata).